The primary structure comprises 238 residues: Lactate utilization protein A (238 aa).

It belongs to the LutA/YkgE family.

Functionally, is involved in L-lactate degradation and allows cells to grow with lactate as the sole carbon source. This Geobacillus sp. (strain WCH70) protein is Lactate utilization protein A.